The following is a 1080-amino-acid chain: Serine/threonine-protein kinase KIC1 (1080 aa).

Residues 23 to 276 enclose the Protein kinase domain; sequence FKRTEVIGRG…ADDLLKSKFI (254 aa). ATP contacts are provided by residues 29–37 and lysine 52; that span reads IGRGKFGVV. The active-site Proton acceptor is aspartate 144. 4 disordered regions span residues 308–347, 615–760, 787–831, and 901–956; these read EGSI…EIKR, KARS…LAPP, STLN…LQMP, and SQSI…NTGN. Low complexity predominate over residues 312–326; sequence PENEPSKPSEAPKPS. Over residues 615–626 the composition is skewed to polar residues; it reads KARSSTVTAGTP. Low complexity predominate over residues 627 to 638; it reads SSSSSIQYKSPS. A compositionally biased stretch (polar residues) spans 656 to 673; it reads STITNQKLGSAVASNSGI. Over residues 674–689 the composition is skewed to low complexity; the sequence is SSTPNNSNNYNNNTDS. Over residues 693–726 the composition is skewed to polar residues; that stretch reads RGSSGSNTANSTQMGITNPGNVTKLSTHKASSPS. Serine 735 is subject to Phosphoserine. The segment covering 743–756 has biased composition (polar residues); the sequence is SPTQNIGHNSTHTN. Low complexity predominate over residues 787–807; sequence STLNTISGNSSNNLTSSNYFS. Residues 808-821 show a composition bias toward basic and acidic residues; it reads NEKEGSRVNGDFKR. Positions 901-913 are enriched in polar residues; that stretch reads SQSISNRKNSSAS. Positions 918 to 956 are enriched in low complexity; that stretch reads NILGSSVSGNVSGIGNNNVGSNNNSGPNNSVPLSANTGN.

Belongs to the protein kinase superfamily. Ser/Thr protein kinase family. Interacts with CDC31.

The catalysed reaction is L-seryl-[protein] + ATP = O-phospho-L-seryl-[protein] + ADP + H(+). It catalyses the reaction L-threonyl-[protein] + ATP = O-phospho-L-threonyl-[protein] + ADP + H(+). Protein kinase involved in morphogenesis and cell integrity. The sequence is that of Serine/threonine-protein kinase KIC1 (KIC1) from Saccharomyces cerevisiae (strain ATCC 204508 / S288c) (Baker's yeast).